The chain runs to 837 residues: MTTAVQPSDTTGFGGGPAGSRASDLIQFQEIMSESAESSSSSSQTNVSAANTLPRESNGQNYADDPSHVYTNIREIEELNSRPVPPTPRADAQPRRDLLNGWFEYETDVGRTFFFNKETGKSQWIPPRFIRTPAQVQEFLRATRTNLDTTCSFQGSSTSSSEEQKENKMRESLADDDRKSQLIEDEEVFDEVCDDVDEQSSPVIDLQSRPLPIPFSDSFTDDEDEDDVKPIEGSIASDSDFDEEPVPTSSRKASTASGVMMPHPYAHVSSFQSTFPRAKNEDTDKLASYVIPPDANETSKTPTAIRVRRPSPTNLRSVSFQNKCTVLKNVPMPQVLPTTSSSFDHHPQYHSNTPDRPILMEDSADFTPSSRCEERRGSGDGREPVRTIRCGDLERSENDEPAEKVVKPKKREWITNYMYLTTAHLILYKDQKSAEKHGKHYDAPQGVWDLRGASVTWYQDNRDVQKKKQRKYIQLELCNTKKYLLRGPNDTEAVEWYKSLEEVVAKLPSPGSSNQPMIDVTNGVARNPSYIGSTRPLSHALIPISRSMRRRDDPMSQSAIETVSTSVSTDEPRPSKETIIEKLRRFFRTRPTVESLKEKGIYKPEPVFGSTLSAICQHENSLVPKFIRVITEVIESKGLETDGIYRVSGNLSAVQKIRCQADQDNYKALVSEEDIHVLTGALKLFFRELTDPLFPISLHKEYTSAMQMPNATTRFKKFEELLSRLPNENRETLKMLLRHLNRVASHSSQNRMQQHNLAIVFGPTLFHNGDGAVNLATKNKKAGKKAKPSKKEETQATPVQSNSHLAFSMIMQSQIVQYLLESANKFDILKAPVNIGR.

Positions 1–11 (MTTAVQPSDTT) are enriched in polar residues. The tract at residues 1-66 (MTTAVQPSDT…SNGQNYADDP (66 aa)) is disordered. The segment covering 33-43 (SESAESSSSSS) has biased composition (low complexity). The segment covering 44 to 61 (QTNVSAANTLPRESNGQN) has biased composition (polar residues). The region spanning 96–129 (RDLLNGWFEYETDVGRTFFFNKETGKSQWIPPRF) is the WW domain. Over residues 150–161 (TCSFQGSSTSSS) the composition is skewed to low complexity. 5 disordered regions span residues 150-181 (TCSFQGSSTSSSEEQKENKMRESLADDDRKSQ), 194-257 (DDVD…STAS), 338-403 (TTSS…EPAE), 548-574 (MRRRDDPMSQSAIETVSTSVSTDEPRP), and 778-800 (KNKKAGKKAKPSKKEETQATPVQ). Basic and acidic residues predominate over residues 162–181 (EEQKENKMRESLADDDRKSQ). Residues 247–257 (PTSSRKASTAS) show a composition bias toward polar residues. Residues 371–403 (RCEERRGSGDGREPVRTIRCGDLERSENDEPAE) show a composition bias toward basic and acidic residues. The 120-residue stretch at 386–505 (RTIRCGDLER…WYKSLEEVVA (120 aa)) folds into the PH domain. The segment covering 556–569 (SQSAIETVSTSVST) has biased composition (polar residues). Residues 610 to 827 (STLSAICQHE…YLLESANKFD (218 aa)) form the Rho-GAP domain. The span at 778 to 788 (KNKKAGKKAKP) shows a compositional bias: basic residues.

The polypeptide is WW domain-containing protein tag-325 (tag-325) (Caenorhabditis elegans).